The primary structure comprises 451 residues: Lysine histidine transporter-like 3 (451 aa).

The Cytoplasmic segment spans residues 1–40 (MKGIPSSSNQILNQDLVEDQSFELEDWLPITASRNANWYY). The chain crosses the membrane as a helical span at residues 41 to 61 (SAFHNVTAIVGAGVLGLPYAM). The Extracellular portion of the chain corresponds to 62 to 63 (SE). The helical transmembrane segment at 64–84 (LGWGPGVVVLILSWVITLYTF) threads the bilayer. At 85 to 115 (WQMIEMHEMFEGKRFDRYHELGQAAFGKKLG) the chain is on the cytoplasmic side. A helical transmembrane segment spans residues 116 to 136 (LYIVVPLQLLVETSACIVYMV). Topologically, residues 137 to 159 (TGGESLKKIHQLSVGDYECRKLK) are extracellular. The helical transmembrane segment at 160–177 (VRHFILIFASSQFVLSLL) threads the bilayer. Topologically, residues 178-182 (KNFNS) are cytoplasmic. The chain crosses the membrane as a helical span at residues 183–203 (ISGVSLVAAVMSMSYSTIAWV). Over 204-227 (ASLTKGVANNVEYGYKRRNNTSVP) the chain is Extracellular. A helical membrane pass occupies residues 228–248 (LAFLGALGEMAFAYAGHNVVL). The Cytoplasmic segment spans residues 249–269 (EIQATIPSTPENPSKRPMWKG). Residues 270-290 (AIVAYIIVAFCYFPVALVGFW) traverse the membrane as a helical segment. Residues 291 to 309 (TFGNNVEENILKTLRGPKG) are Extracellular-facing. The chain crosses the membrane as a helical span at residues 310 to 330 (LIIVANIFVIIHLMGSYQVYA). The Cytoplasmic portion of the chain corresponds to 331–358 (MPVFDMIESVMIKKWHFSPTRVLRFTIR). A helical transmembrane segment spans residues 359-379 (WTFVAATMGIAVALPHFSALL). A topological domain (extracellular) is located at residue Ser380. The chain crosses the membrane as a helical span at residues 381–401 (FFGGFIFAPTTYFIPCIIWLI). At 402-413 (LKKPKRFSLSWC) the chain is on the cytoplasmic side. A helical membrane pass occupies residues 414 to 434 (INWICIILGVLVMIIAPIGGL). The Extracellular portion of the chain corresponds to 435 to 451 (AKLMNALKQPDSSCKST).

This sequence belongs to the amino acid/polyamine transporter 2 family. Amino acid/auxin permease (AAAP) (TC 2.A.18.2) subfamily.

It is found in the cell membrane. In terms of biological role, amino acid transporter. In Arabidopsis thaliana (Mouse-ear cress), this protein is Lysine histidine transporter-like 3.